Consider the following 329-residue polypeptide: Endonuclease 8-like 2 (329 aa).

The Schiff-base intermediate with DNA role is filled by Pro-2. Catalysis depends on Glu-3, which acts as the Proton donor. Lys-50 serves as the catalytic Proton donor; for beta-elimination activity. At Lys-50 the chain carries N6-acetyllysine. Ser-68 is modified (phosphoserine). The interval 88-112 (GPSAQEPSAGPSGSGEPVPSRSAET) is disordered. N6-acetyllysine is present on Lys-150. Asn-227 is a binding site for DNA. The FPG-type zinc-finger motif lies at 280–316 (QIYQKEQCPSGHQVMKETFGPPDGLQRLTWWCPQCQP). Residue Arg-306 is the Proton donor; for delta-elimination activity of the active site.

This sequence belongs to the FPG family. In terms of assembly, binds EP300.

Its subcellular location is the nucleus. The catalysed reaction is 2'-deoxyribonucleotide-(2'-deoxyribose 5'-phosphate)-2'-deoxyribonucleotide-DNA = a 3'-end 2'-deoxyribonucleotide-(2,3-dehydro-2,3-deoxyribose 5'-phosphate)-DNA + a 5'-end 5'-phospho-2'-deoxyribonucleoside-DNA + H(+). With respect to regulation, acetylation of Lys-50 leads to loss of DNA nicking activity. In terms of biological role, involved in base excision repair of DNA damaged by oxidation or by mutagenic agents. Has DNA glycosylase activity towards 5-hydroxyuracil and other oxidized derivatives of cytosine with a preference for mismatched double-stranded DNA (DNA bubbles). Has low or no DNA glycosylase activity towards thymine glycol, 2-hydroxyadenine, hypoxanthine and 8-oxoguanine. Has AP (apurinic/apyrimidinic) lyase activity and introduces nicks in the DNA strand. Cleaves the DNA backbone by beta-delta elimination to generate a single-strand break at the site of the removed base with both 3'- and 5'-phosphates. The polypeptide is Endonuclease 8-like 2 (Neil2) (Mus musculus (Mouse)).